The following is a 107-amino-acid chain: Phosphoribosyl-ATP pyrophosphatase (107 aa).

The protein belongs to the PRA-PH family.

The protein resides in the cytoplasm. It catalyses the reaction 1-(5-phospho-beta-D-ribosyl)-ATP + H2O = 1-(5-phospho-beta-D-ribosyl)-5'-AMP + diphosphate + H(+). It functions in the pathway amino-acid biosynthesis; L-histidine biosynthesis; L-histidine from 5-phospho-alpha-D-ribose 1-diphosphate: step 2/9. The protein is Phosphoribosyl-ATP pyrophosphatase of Caulobacter sp. (strain K31).